The sequence spans 179 residues: Large ribosomal subunit protein uL6 (179 aa).

The protein belongs to the universal ribosomal protein uL6 family. In terms of assembly, part of the 50S ribosomal subunit.

This protein binds to the 23S rRNA, and is important in its secondary structure. It is located near the subunit interface in the base of the L7/L12 stalk, and near the tRNA binding site of the peptidyltransferase center. The polypeptide is Large ribosomal subunit protein uL6 (Bifidobacterium animalis subsp. lactis (strain AD011)).